The following is a 203-amino-acid chain: MELDAVSRSYKRWAIYDFSFGKVSESPRRRTAAHVNARGGRVLEVGVGTGLSLPLYSHRVAVTGIDFSHEMLARAREKVEEMGLEPVKELRQMDARELDFPDETFDTVVAMFLVSVVPEPERVVSEMARVCRKGGEVVIVNHFARDKGPLAAVEKALARFENTLGWHSDFAIERVTADPRLEVVEQTPMSPGGLFTFLRFQRR.

The enzyme catalyses a 1,2-diacyl-sn-glycero-3-phosphoethanolamine + S-adenosyl-L-methionine = a 1,2-diacyl-sn-glycero-3-phospho-N-methylethanolamine + S-adenosyl-L-homocysteine + H(+). It functions in the pathway phospholipid metabolism; phosphatidylcholine biosynthesis. In terms of biological role, this enzyme catalyzes three distinct methylation reactions for converting phosphatidylethanolamine to phosphatidylcholine. The chain is Phosphatidylethanolamine N-methyltransferase (pmtA) from Cereibacter sphaeroides (Rhodobacter sphaeroides).